The sequence spans 312 residues: Olfactory receptor 2L5 (312 aa).

Over 1 to 24 (MENYNQTSTDFILLGLFPPSKIGL) the chain is Extracellular. N5 is a glycosylation site (N-linked (GlcNAc...) asparagine). A helical transmembrane segment spans residues 25–48 (FLFILFVLIFLMALIGNLSMILLI). Topologically, residues 49-56 (FLDTHLHT) are cytoplasmic. A helical transmembrane segment spans residues 57–78 (PMYFLLSQLSLIDLNYISTIVP). Topologically, residues 79-99 (KMASDFLYGNKSISFIGCGIQ) are extracellular. A disulfide bridge connects residues C96 and C188. A helical transmembrane segment spans residues 100-119 (SFFFMTFAGAEALLLTSMAY). Over 120-138 (DRYVAICFPLHYPIRMSKR) the chain is Cytoplasmic. The helical transmembrane segment at 139-157 (MYVLMITGSWMIGSINSCA) threads the bilayer. Over 158–194 (HTVYAFRIPYCKSRAINHFFCDVPAMLTLACTDTWVY) the chain is Extracellular. The helical transmembrane segment at 195–218 (EYTVFLSSTIFLVFPFTGIACSYG) threads the bilayer. Residues 219-235 (WVLLAVYRMHSAEGRKK) are Cytoplasmic-facing. Residues 236-258 (AYSTCSTHLTVVTFYYAPFAYTY) traverse the membrane as a helical segment. Topologically, residues 259 to 271 (LCPRSLRSLTEDK) are extracellular. Residues 272–291 (VLAVFYTILTPMLNPIIYSL) traverse the membrane as a helical segment. The Cytoplasmic portion of the chain corresponds to 292–312 (RNKEVMGALTRVIQNIFSVKM).

It belongs to the G-protein coupled receptor 1 family.

The protein resides in the cell membrane. In terms of biological role, odorant receptor. This Homo sapiens (Human) protein is Olfactory receptor 2L5 (OR2L5).